The chain runs to 352 residues: Dolichol-phosphate mannosyltransferase (352 aa).

The Cytoplasmic segment spans residues 1-229 (MKVSVIIPTY…HIYRLMKWEG (229 aa)). GDP-alpha-D-mannose contacts are provided by P8, Y10, E12, V37, D39, D89, A90, D91, Q93, R117, V156, K178, R202, and K208. The Mg(2+) site is built by D91 and Q93. Residues D91 and Q93 each coordinate Mn(2+). A helical transmembrane segment spans residues 230-256 (EIDRIVKFSIVGLSGILVNEGFLWLFV). Over 257–261 (NLGIP) the chain is Extracellular. The chain crosses the membrane as a helical span at residues 262–286 (KEIAVIPAVELSILNNFFWNDIWTF). At 287-293 (KDIRRGS) the chain is on the cytoplasmic side. Residues 294-320 (IFSRLLKFHIAALSGAVVNFIVYWILL) traverse the membrane as a helical segment. The Extracellular portion of the chain corresponds to 321–325 (FLGIH). A helical membrane pass occupies residues 326 to 350 (YLIANLVGIVLSFGVRYVINRHVTW). Residues 351 to 352 (AT) lie on the Cytoplasmic side of the membrane.

This sequence belongs to the glycosyltransferase 2 family. The cofactor is Mg(2+). It depends on Mn(2+) as a cofactor. Requires Ca(2+) as cofactor.

The protein localises to the cell membrane. It carries out the reaction a di-trans,poly-cis-dolichyl phosphate + GDP-alpha-D-mannose = a di-trans,poly-cis-dolichyl beta-D-mannosyl phosphate + GDP. It participates in protein modification; protein glycosylation. Transfers mannose from GDP-mannose to dolichol monophosphate to form dolichol phosphate mannose (Dol-P-Man) which is the mannosyl donor in pathways leading to N-glycosylation, glycosyl phosphatidylinositol membrane anchoring, and O-mannosylation of proteins. In Pyrococcus furiosus (strain ATCC 43587 / DSM 3638 / JCM 8422 / Vc1), this protein is Dolichol-phosphate mannosyltransferase.